Consider the following 614-residue polypeptide: UDP-sugar pyrophosphorylase (614 aa).

An N-acetylalanine modification is found at Ala2.

It belongs to the USP family. Mg(2+) is required as a cofactor. The cofactor is Mn(2+). Ubiquitous, but most abundant in rosette leaves, inflorescences, stems, stamens and pollen.

It carries out the reaction a monosaccharide 1-phosphate + UTP + H(+) = a UDP-monosaccharide + diphosphate. In terms of biological role, required for the synthesis of the intine, the pectocellulosic inner wall of developing pollen. May function as the terminal enzyme of the myo-inositol oxidation (MIO) pathway. May also play a role in the salvage pathway for synthesis of nucleotide sugars. Can use a wide range of substrates including glucose-1-phosphate, galactose-1-phosphate, xylose-1-phosphate, arabinose-1-phosphate and glucuronate-1-phosphate. This Arabidopsis thaliana (Mouse-ear cress) protein is UDP-sugar pyrophosphorylase (USP).